The chain runs to 202 residues: Small ribosomal subunit protein uS4c (202 aa).

The S4 RNA-binding domain occupies 90-153 (MRLDNVIFRL…KSEAIISKNI (64 aa)).

This sequence belongs to the universal ribosomal protein uS4 family. As to quaternary structure, part of the 30S ribosomal subunit. Contacts protein S5. The interaction surface between S4 and S5 is involved in control of translational fidelity.

It is found in the plastid. The protein localises to the chloroplast. In terms of biological role, one of the primary rRNA binding proteins, it binds directly to 16S rRNA where it nucleates assembly of the body of the 30S subunit. Its function is as follows. With S5 and S12 plays an important role in translational accuracy. This Hypopterygium laricinum (Moss) protein is Small ribosomal subunit protein uS4c (rps4).